The sequence spans 138 residues: Iron sulfur cluster assembly protein 1 (138 aa).

The protein belongs to the NifU family. As to quaternary structure, component of the core Fe-S cluster (ISC) assembly machinery. [2Fe-2S] cluster serves as cofactor.

The protein resides in the cytoplasm. Its pathway is cofactor biosynthesis; iron-sulfur cluster biosynthesis. In terms of biological role, scaffold protein for the de novo synthesis of iron-sulfur (Fe-S) clusters within mitosomes, which is required for maturation of both [2Fe-2S] and [4Fe-4S] proteins. First, a [2Fe-2S] cluster is transiently assembled on the scaffold protein ISU1. In a second step, the cluster is released from ISU1, transferred to a glutaredoxin, followed by the formation of [2Fe-2S] proteins, the synthesis of [4Fe-4S] clusters and their target-specific insertion into the recipient apoproteins. Cluster assembly on ISU1 depends on the function of the cysteine desulfurase complex NFS1-ISD11, which serves as the sulfur donor for cluster synthesis, the iron-binding protein frataxin as the putative iron donor, and the electron transfer chain comprised of ferredoxin reductase and ferredoxin, which receive their electrons from NADH. The sequence is that of Iron sulfur cluster assembly protein 1 (ISU1) from Trachipleistophora hominis (Microsporidian parasite).